Consider the following 430-residue polypeptide: Asparagine--tRNA ligase (430 aa).

This sequence belongs to the class-II aminoacyl-tRNA synthetase family. In terms of assembly, homodimer.

It is found in the cytoplasm. The catalysed reaction is tRNA(Asn) + L-asparagine + ATP = L-asparaginyl-tRNA(Asn) + AMP + diphosphate + H(+). This chain is Asparagine--tRNA ligase, found in Staphylococcus epidermidis (strain ATCC 35984 / DSM 28319 / BCRC 17069 / CCUG 31568 / BM 3577 / RP62A).